The sequence spans 445 residues: Dihydroorotate dehydrogenase (quinone), mitochondrial (445 aa).

Residues 1–16 (MNSGFPRILSKKLFTL) constitute a mitochondrion transit peptide. Residues 39–56 (LLKYTVGIAIGSFAGFYF) form a helical membrane-spanning segment. FMN contacts are provided by residues 124–128 (AGLDK) and Ser148. Lys128 is a substrate binding site. 173 to 177 (NRYGF) is a substrate binding site. 2 residues coordinate FMN: Asn221 and Asn251. 251-256 (NVSSPN) lines the substrate pocket. Ser254 (nucleophile) is an active-site residue. Residues Lys302 and Ser330 each contribute to the FMN site. 331-332 (NT) contacts substrate. FMN is bound by residues Gly356, Gly386, and 407–408 (YT).

It belongs to the dihydroorotate dehydrogenase family. Type 2 subfamily. FMN serves as cofactor.

The protein localises to the mitochondrion inner membrane. The catalysed reaction is (S)-dihydroorotate + a quinone = orotate + a quinol. It participates in pyrimidine metabolism; UMP biosynthesis via de novo pathway; orotate from (S)-dihydroorotate (quinone route): step 1/1. Catalyzes the conversion of dihydroorotate to orotate with quinone as electron acceptor. This chain is Dihydroorotate dehydrogenase (quinone), mitochondrial (URA9), found in Kluyveromyces lactis (strain ATCC 8585 / CBS 2359 / DSM 70799 / NBRC 1267 / NRRL Y-1140 / WM37) (Yeast).